We begin with the raw amino-acid sequence, 64 residues long: Cytochrome c oxidase subunit 9, mitochondrial (64 aa).

The Mitochondrial matrix portion of the chain corresponds to 1-15 (MAATAVRPITGMLRR). The helical transmembrane segment at 16 to 36 (GLILDIGIALGVGFVMANGYW) threads the bilayer. The Mitochondrial intermembrane portion of the chain corresponds to 37–64 (YGYHMPRTNARDNYYKKLEEERAARMGA).

It belongs to the fungal cytochrome c oxidase subunit 7a family. Component of the cytochrome c oxidase (complex IV, CIV), a multisubunit enzyme composed of 11 subunits. The complex is composed of a catalytic core of 3 subunits Cox1, Cox2 and Cox3, encoded in the mitochondrial DNA, and 8 supernumerary subunits Cox4, Cox5a/Cox5, Cox6, Cox7, Cox8, Cox7a/Cox9, Cox6b/Cox12 and Cox6a/Cox13, which are encoded in the nuclear genome. The complex exists as a monomer or a dimer and forms respiratory supercomplexes (SCs) in the inner mitochondrial membrane with NADH-ubiquinone oxidoreductase (complex I, CI) and ubiquinol-cytochrome c oxidoreductase (cytochrome b-c1 complex, complex III, CIII), resulting in various different assemblies (supercomplexes I(1)IV(1), I(1)III(3)IV(2), III(2)IV(1) and III(2)IV(2) as well as larger supercomplexes of compositions like I(1)III(2)IV(5-6)).

Its subcellular location is the mitochondrion inner membrane. It participates in energy metabolism; oxidative phosphorylation. Component of the cytochrome c oxidase, the last enzyme in the mitochondrial electron transport chain which drives oxidative phosphorylation. The respiratory chain contains 3 multisubunit complexes succinate dehydrogenase (complex II, CII), ubiquinol-cytochrome c oxidoreductase (cytochrome b-c1 complex, complex III, CIII) and cytochrome c oxidase (complex IV, CIV), that cooperate to transfer electrons derived from NADH and succinate to molecular oxygen, creating an electrochemical gradient over the inner membrane that drives transmembrane transport and the ATP synthase. Cytochrome c oxidase is the component of the respiratory chain that catalyzes the reduction of oxygen to water. Electrons originating from reduced cytochrome c in the intermembrane space (IMS) are transferred via the dinuclear copper A center (CU(A)) of Cox2 and heme A of Cox1 to the active site in Cox1, a binuclear center (BNC) formed by heme A3 and copper B (CU(B)). The BNC reduces molecular oxygen to 2 water molecules using 4 electrons from cytochrome c in the IMS and 4 protons from the mitochondrial matrix. In Neurospora crassa (strain ATCC 24698 / 74-OR23-1A / CBS 708.71 / DSM 1257 / FGSC 987), this protein is Cytochrome c oxidase subunit 9, mitochondrial (cox-17).